Consider the following 926-residue polypeptide: Alpha-aminoadipic semialdehyde synthase, mitochondrial (926 aa).

A mitochondrion-targeting transit peptide spans Met-1 to Ala-27. The segment at Leu-28–Leu-455 is lysine-ketoglutarate reductase. An N6-acetyllysine mark is found at Lys-48, Lys-52, and Lys-56. Lys-93 is modified (N6-acetyllysine; alternate). N6-succinyllysine; alternate is present on Lys-93. Lys-128 bears the N6-acetyllysine mark. The residue at position 138 (Lys-138) is an N6-acetyllysine; alternate. An N6-succinyllysine; alternate modification is found at Lys-138. An N6-succinyllysine modification is found at Lys-274. N6-acetyllysine; alternate is present on Lys-286. An N6-succinyllysine; alternate modification is found at Lys-286. The residue at position 333 (Lys-333) is an N6-succinyllysine. Lys-458 is subject to N6-acetyllysine; alternate. Lys-458 is modified (N6-succinyllysine; alternate). The tract at residues Met-477–Leu-926 is saccharopine dehydrogenase. NAD(+) contacts are provided by Ser-488, Asp-512, and Gln-516. Lys-523 and Lys-535 each carry N6-acetyllysine; alternate. An N6-succinyllysine; alternate mark is found at Lys-523 and Lys-535. NAD(+) is bound by residues Leu-554, Ala-576, and Ser-577. Ser-577–Tyr-578 serves as a coordination point for L-saccharopine. At Lys-584 the chain carries N6-acetyllysine; alternate. Lys-584 carries the N6-succinyllysine; alternate modification. NAD(+) is bound by residues Leu-603, Asp-604, and Pro-605. Asp-604 provides a ligand contact to L-saccharopine. Arg-703 is a binding site for L-saccharopine. N6-acetyllysine is present on Lys-707. Thr-724–Arg-726 is a binding site for L-saccharopine. Position 732 is an N6-succinyllysine (Lys-732). Residue Lys-739 is modified to N6-acetyllysine. The residue at position 761 (Lys-761) is an N6-acetyllysine; alternate. At Lys-761 the chain carries N6-succinyllysine; alternate. Residues Lys-778 and Lys-780 each carry the N6-acetyllysine modification.

In the N-terminal section; belongs to the AlaDH/PNT family. It in the C-terminal section; belongs to the saccharopine dehydrogenase family. Homotetramer. Highly expressed in kidney and liver, very low expression is seen in heart, brain, spleen, lung, skeletal muscle and testis.

The protein localises to the mitochondrion. The catalysed reaction is L-saccharopine + NADP(+) + H2O = L-lysine + 2-oxoglutarate + NADPH + H(+). The enzyme catalyses L-saccharopine + NAD(+) + H2O = (S)-2-amino-6-oxohexanoate + L-glutamate + NADH + H(+). It functions in the pathway amino-acid degradation; L-lysine degradation via saccharopine pathway; glutaryl-CoA from L-lysine: step 1/6. Its pathway is amino-acid degradation; L-lysine degradation via saccharopine pathway; glutaryl-CoA from L-lysine: step 2/6. Functionally, bifunctional enzyme that catalyzes the first two steps in lysine degradation. The polypeptide is Alpha-aminoadipic semialdehyde synthase, mitochondrial (Mus musculus (Mouse)).